The primary structure comprises 370 residues: Phospho-N-acetylmuramoyl-pentapeptide-transferase (370 aa).

11 helical membrane-spanning segments follow: residues 15–35 (PLEG…AAFA), 44–64 (LLSL…WWGV), 93–113 (MGGL…SWSG), 115–135 (AAEQ…VGGI), 155–175 (LLLQ…RGWI), 183–203 (FDIN…VFLA), 213–233 (GLDG…ALQL), 240–260 (GDPS…GFLV), 268–288 (VFMG…VALL), 296–316 (LIMG…VWVF), and 347–367 (QLVV…GIFF).

Belongs to the glycosyltransferase 4 family. MraY subfamily. The cofactor is Mg(2+).

The protein resides in the cell inner membrane. The enzyme catalyses UDP-N-acetyl-alpha-D-muramoyl-L-alanyl-gamma-D-glutamyl-meso-2,6-diaminopimeloyl-D-alanyl-D-alanine + di-trans,octa-cis-undecaprenyl phosphate = di-trans,octa-cis-undecaprenyl diphospho-N-acetyl-alpha-D-muramoyl-L-alanyl-D-glutamyl-meso-2,6-diaminopimeloyl-D-alanyl-D-alanine + UMP. Its pathway is cell wall biogenesis; peptidoglycan biosynthesis. Its function is as follows. Catalyzes the initial step of the lipid cycle reactions in the biosynthesis of the cell wall peptidoglycan: transfers peptidoglycan precursor phospho-MurNAc-pentapeptide from UDP-MurNAc-pentapeptide onto the lipid carrier undecaprenyl phosphate, yielding undecaprenyl-pyrophosphoryl-MurNAc-pentapeptide, known as lipid I. The sequence is that of Phospho-N-acetylmuramoyl-pentapeptide-transferase from Synechococcus sp. (strain CC9311).